The following is a 424-amino-acid chain: Glutamate-1-semialdehyde 2,1-aminomutase (424 aa).

Lys-258 carries the post-translational modification N6-(pyridoxal phosphate)lysine.

The protein belongs to the class-III pyridoxal-phosphate-dependent aminotransferase family. HemL subfamily. Requires pyridoxal 5'-phosphate as cofactor.

It is found in the cytoplasm. The enzyme catalyses (S)-4-amino-5-oxopentanoate = 5-aminolevulinate. It participates in porphyrin-containing compound metabolism; protoporphyrin-IX biosynthesis; 5-aminolevulinate from L-glutamyl-tRNA(Glu): step 2/2. The polypeptide is Glutamate-1-semialdehyde 2,1-aminomutase (Pyrobaculum islandicum (strain DSM 4184 / JCM 9189 / GEO3)).